Here is a 272-residue protein sequence, read N- to C-terminus: Orotidine 5'-phosphate decarboxylase (272 aa).

Lys-96 functions as the Proton donor in the catalytic mechanism.

Belongs to the OMP decarboxylase family. Type 2 subfamily.

The catalysed reaction is orotidine 5'-phosphate + H(+) = UMP + CO2. It participates in pyrimidine metabolism; UMP biosynthesis via de novo pathway; UMP from orotate: step 2/2. The chain is Orotidine 5'-phosphate decarboxylase from Phocaeicola vulgatus (strain ATCC 8482 / DSM 1447 / JCM 5826 / CCUG 4940 / NBRC 14291 / NCTC 11154) (Bacteroides vulgatus).